The following is a 238-amino-acid chain: Uridylate kinase (238 aa).

An ATP-binding site is contributed by 10 to 13 (KFSG). An involved in allosteric activation by GTP region spans residues 18 to 23 (GGNGFG). Glycine 52 contacts UMP. Positions 53 and 57 each coordinate ATP. UMP-binding positions include aspartate 73 and 134 to 141 (TGNPFFTT). Positions 161, 167, and 170 each coordinate ATP.

It belongs to the UMP kinase family. In terms of assembly, homohexamer.

The protein resides in the cytoplasm. It carries out the reaction UMP + ATP = UDP + ADP. The protein operates within pyrimidine metabolism; CTP biosynthesis via de novo pathway; UDP from UMP (UMPK route): step 1/1. Its activity is regulated as follows. Allosterically activated by GTP. Inhibited by UTP. Catalyzes the reversible phosphorylation of UMP to UDP. This chain is Uridylate kinase, found in Campylobacter fetus subsp. fetus (strain 82-40).